The following is a 173-amino-acid chain: Placenta-specific protein 1 (173 aa).

An N-terminal signal peptide occupies residues 1–23; sequence MNLRKFLGGTVLVAFMLFSYSEQ.

Belongs to the PLAC1 family. As to expression, expressed in placenta.

It localises to the secreted. Functionally, may play a role in placental development. This Mus musculus (Mouse) protein is Placenta-specific protein 1.